A 411-amino-acid chain; its full sequence is MEVNYCPETPLLSSNDHEAIDHKPKLTGMVSSMKSNFFADLPQKLRSKIDPENPLHLDVSKAAGLKEDEKEYYERQLATLKSFEEVESFLARSDEYTIDEKEEEEDRAERAAQELAMQISNWANIFLLALKIYATVKSGSIAIAASTLDSLLDLMAGGILWFTHLSMKNVNIYKYPIGKLRVQPVGIIIFAAVMATLGFQVLLVAAEQLISNEPSEKMNHVQLIWLYSIMLSATAIKLVLWIYCKSSRNHIVRAYAKDHHFDVVTNVLGLVAAVLANAFYWWLDPTGAILLAIYTIVNWSGTVMENAVSLIGQSAPPEVLQKLTYLVMRQGGDNIKHVDTVRAYTFGVLYFVEVDIELPEDLPLKEAHAIGESLQIKLEELPEVERAFVHLDFECHHKPEHSVLSTIPNDL.

The Cytoplasmic portion of the chain corresponds to M1–L115. A helical transmembrane segment spans residues A116–V136. Residues K137–S140 lie on the Vacuolar side of the membrane. Residues I141–W161 form a helical membrane-spanning segment. Residues F162–P184 lie on the Cytoplasmic side of the membrane. The helical transmembrane segment at V185–A205 threads the bilayer. Topologically, residues A206–Q222 are vacuolar. The chain crosses the membrane as a helical span at residues L223–Y243. Residues C244–D262 are Cytoplasmic-facing. The chain crosses the membrane as a helical span at residues V263 to L283. At D284–G287 the chain is on the vacuolar side. A helical transmembrane segment spans residues A288–V308. Over S309–H390 the chain is Cytoplasmic.

The protein belongs to the cation diffusion facilitator (CDF) transporter (TC 2.A.4) family.

It is found in the vacuole membrane. Involved in sequestration of excess metal in the cytoplasm into vacuoles to maintain metal homeostasis. The polypeptide is Putative metal tolerance protein C3 (MTPC3) (Arabidopsis thaliana (Mouse-ear cress)).